Consider the following 339-residue polypeptide: Biotin synthase (339 aa).

One can recognise a Radical SAM core domain in the interval F47–R276. The [4Fe-4S] cluster site is built by C65, C69, and C72. The [2Fe-2S] cluster site is built by C109, C141, C201, and R271.

This sequence belongs to the radical SAM superfamily. Biotin synthase family. In terms of assembly, homodimer. [4Fe-4S] cluster is required as a cofactor. [2Fe-2S] cluster serves as cofactor.

The enzyme catalyses (4R,5S)-dethiobiotin + (sulfur carrier)-SH + 2 reduced [2Fe-2S]-[ferredoxin] + 2 S-adenosyl-L-methionine = (sulfur carrier)-H + biotin + 2 5'-deoxyadenosine + 2 L-methionine + 2 oxidized [2Fe-2S]-[ferredoxin]. It functions in the pathway cofactor biosynthesis; biotin biosynthesis; biotin from 7,8-diaminononanoate: step 2/2. Its function is as follows. Catalyzes the conversion of dethiobiotin (DTB) to biotin by the insertion of a sulfur atom into dethiobiotin via a radical-based mechanism. The sequence is that of Biotin synthase from Bacillus velezensis (strain DSM 23117 / BGSC 10A6 / LMG 26770 / FZB42) (Bacillus amyloliquefaciens subsp. plantarum).